Reading from the N-terminus, the 964-residue chain is Protein translocase subunit SecA (964 aa).

Residues Q86, 104 to 108 (GEGKT), and D494 each bind ATP. Residues 848–964 (AESADTIAVA…YKMCHGQNEK (117 aa)) form a disordered region. Residues 871–882 (AEGEVEEEDEDT) show a composition bias toward acidic residues. Residues 889-900 (AESAAASGAGES) show a composition bias toward low complexity. Zn(2+) contacts are provided by C947, C949, C958, and H959.

Belongs to the SecA family. As to quaternary structure, monomer and homodimer. Part of the essential Sec protein translocation apparatus which comprises SecA, SecYEG and auxiliary proteins SecDF. Other proteins may also be involved. The cofactor is Zn(2+).

It localises to the cell membrane. The protein resides in the cytoplasm. The catalysed reaction is ATP + H2O + cellular proteinSide 1 = ADP + phosphate + cellular proteinSide 2.. Its function is as follows. Part of the Sec protein translocase complex. Interacts with the SecYEG preprotein conducting channel. Has a central role in coupling the hydrolysis of ATP to the transfer of proteins into and across the cell membrane, serving as an ATP-driven molecular motor driving the stepwise translocation of polypeptide chains across the membrane. This Bifidobacterium longum (strain NCC 2705) protein is Protein translocase subunit SecA.